The chain runs to 446 residues: Protein dyf-7 (446 aa).

Residues 1–24 (MNQLWRASCLQVLITFLLIHQNKA) form the signal peptide. The ZP domain occupies 35 to 295 (DCIADSFTVV…KTCYKKVSDS (261 aa)). An intrachain disulfide couples Cys211 to Cys273. Residues 377-397 (IPLIIMGSLASLLLFSAGAAI) traverse the membrane as a helical segment.

Monomer under reducing conditions. Homodimer under non-reducing conditions. May also form higher order oligomers. Post-translationally, proteolytically cleaved and secreted in vitro. In terms of tissue distribution, in the embryo, expressed in the excretory cell and, during dendrite formation, in the non-neuronal cells surrounding the sensory neurons, including hypodermal cells.

It localises to the cell membrane. Its subcellular location is the cell projection. The protein localises to the dendrite. The protein resides in the secreted. In terms of biological role, required for permeability of amphid and phasmid neurons to external dyes, chemotaxis to ammonium chloride, avoidance of high osmotic stimuli, male mating and dauer formation. Along with dex-1, enables neurite growth and maintenance by anchoring amphid dendritic tips during neuron cell body migration in embryonic and larval development. The sequence is that of Protein dyf-7 from Caenorhabditis elegans.